The primary structure comprises 1075 residues: Error-prone DNA polymerase (1075 aa).

This sequence belongs to the DNA polymerase type-C family. DnaE2 subfamily.

The protein localises to the cytoplasm. The catalysed reaction is DNA(n) + a 2'-deoxyribonucleoside 5'-triphosphate = DNA(n+1) + diphosphate. DNA polymerase involved in damage-induced mutagenesis and translesion synthesis (TLS). It is not the major replicative DNA polymerase. This Ralstonia nicotianae (strain ATCC BAA-1114 / GMI1000) (Ralstonia solanacearum) protein is Error-prone DNA polymerase.